Reading from the N-terminus, the 434-residue chain is D-amino acid dehydrogenase (434 aa).

FAD is bound at residue 3–17; the sequence is VVILGSGVVGVASAW.

Belongs to the DadA oxidoreductase family. It depends on FAD as a cofactor.

It carries out the reaction a D-alpha-amino acid + A + H2O = a 2-oxocarboxylate + AH2 + NH4(+). It functions in the pathway amino-acid degradation; D-alanine degradation; NH(3) and pyruvate from D-alanine: step 1/1. Functionally, oxidative deamination of D-amino acids. This is D-amino acid dehydrogenase from Yersinia enterocolitica serotype O:8 / biotype 1B (strain NCTC 13174 / 8081).